The chain runs to 158 residues: Transcriptional repressor NrdR (158 aa).

The segment at 3–34 (CPYCGFEESKVVDSRSTEDHKAIRRRRECLKC) is a zinc-finger region. Residues 49 to 139 (VLVIKRDSNR…VYRQFKDINT (91 aa)) enclose the ATP-cone domain.

It belongs to the NrdR family. Requires Zn(2+) as cofactor.

Functionally, negatively regulates transcription of bacterial ribonucleotide reductase nrd genes and operons by binding to NrdR-boxes. In Clostridium novyi (strain NT), this protein is Transcriptional repressor NrdR.